Consider the following 231-residue polypeptide: Response regulator Rre1 (231 aa).

The Response regulatory domain maps to 6-123; sequence SLLLVDDEPG…ELEAIVRNLL (118 aa). Position 56 is a 4-aspartylphosphate (Asp-56). The 66-residue stretch at 163–228 folds into the HTH luxR-type domain; sequence PSPIKLDFTP…ELVRFALQHG (66 aa). Residues 187 to 206 constitute a DNA-binding region (H-T-H motif); the sequence is NKEIAAQLKTSVRNVEKYVS.

Interacts with histidine kinase Hik2; may accept phosphate from Hik2.

Member of at least 2 two-component regulatory systems Hik2/Rre1 and Hik34/Rre1. Responds to hyperosmotic stress, regulates expression of at least 24 genes including dnaK2 and hspA with Hik34 and sigB (sll0306), sll0528, slr1119, slr0852 and ssr3188 with Hik2. Responds to salt stress, regulates expression of at least 24 genes including adhA, dnaK2 and hspA with Hik34. Binds the adhA promoter. Phosphorylated by Hik2 in vitro. Phosphorylated protein has 10-fold higher affinity for DNA than unphosphorylated protein. The sequence is that of Response regulator Rre1 from Synechocystis sp. (strain ATCC 27184 / PCC 6803 / Kazusa).